Reading from the N-terminus, the 1063-residue chain is Structural polyprotein (1063 aa).

A disordered region spans residues 1–131; sequence MASTTPITME…LGPPTNPFQA (131 aa). Residues 30 to 69 are human C1QBP/SF2P32-binding; it reads GASQSRRPRPPRQRDSSTSGDDSGRDSGGPRRRRGNRGRG. Residue S46 is modified to Phosphoserine; by host. Basic and acidic residues predominate over residues 70–87; it reads QLRDWSRAPPPPEERQES. Positions 93-107 are enriched in pro residues; that stretch reads APKPSRAPPQQPQPP. C153 and C197 are oxidised to a cystine. The tract at residues 279–300 is functions as E2 signal peptide; sequence GAPQAFLAGLLLAAVAVGTARA. Topologically, residues 301–534 are extracellular; the sequence is GLQPRADMAA…LWLATANALS (234 aa). N-linked (GlcNAc...) asparagine; by host glycosylation is found at N353, N371, N410, and N429. Residues 535-555 form a helical membrane-spanning segment; sequence LDHALAAFVLLVPWVLIFMVC. Topologically, residues 556–582 are cytoplasmic; sequence RRACRRRGAAAALTAVVLQGYNPPAYG. The tract at residues 563 to 582 is functions as E1 signal peptide; the sequence is GAAAALTAVVLQGYNPPAYG. The Extracellular segment spans residues 583–1028; sequence EEAFTYLCTA…QTWAEWAAAH (446 aa). 8 disulfide bridges follow: C590-C595, C619-C824, C641-C653, C699-C712, C758-C767, C807-C817, C931-C934, and C950-C983. N658 carries N-linked (GlcNAc...) asparagine; by host glycosylation. Ca(2+)-binding residues include N670 and A671. Residues D718 and T719 each coordinate Ca(2+). 2 N-linked (GlcNAc...) asparagine; by host glycosylation sites follow: N759 and N791. O-linked (GalNAc...) threonine; by host glycosylation is found at T1011 and T1012. The chain crosses the membrane as a helical span at residues 1029–1049; the sequence is WWQLTLGAICALLLAGLLACC. The Extracellular segment spans residues 1050-1063; that stretch reads AKCLYYLRGAIAPR.

Homodimer; further assembles into homooligomer. Interacts with human C1QBP. Interacts (via N-terminus) with protease/methyltransferase p150. In terms of assembly, heterodimer with spike glycoprotein E2. As to quaternary structure, heterodimer with spike glycoprotein E1. Post-translationally, structural polyprotein: Specific enzymatic cleavages in vivo yield mature proteins. Two signal peptidase-mediated cleavages within the polyprotein produce the structural proteins capsid, E2, and E1. The E2 signal peptide remains attached to the C-terminus of the capsid protein after cleavage by the signal peptidase. Another signal peptide at E2 C-terminus directs E1 to the ER, with a similar mechanism. In terms of processing, contains three N-linked oligosaccharides. Capsid is phosphorylated on Ser-46 by host. This phosphorylation negatively regulates capsid protein RNA-binding activity. Dephosphorylated by human PP1A.

Its subcellular location is the virion. The protein resides in the host cytoplasm. The protein localises to the host mitochondrion. It is found in the virion membrane. It localises to the host Golgi apparatus membrane. In terms of biological role, capsid protein interacts with genomic RNA and assembles into icosahedric core particles 65-70 nm in diameter. The resulting nucleocapsid eventually associates with the cytoplasmic domain of E2 at the cell membrane, leading to budding and formation of mature virions from host Golgi membranes. Phosphorylation negatively regulates RNA-binding activity, possibly delaying virion assembly during the viral replication phase. Capsid protein dimerizes and becomes disulfide-linked in the virion. Modulates genomic RNA replication. Modulates subgenomic RNA synthesis by interacting with human C1QBP/SF2P32. Induces both perinuclear clustering of mitochondria and the formation of electron-dense intermitochondrial plaques, both hallmarks of rubella virus infected cells. Induces apoptosis when expressed in transfected cells. Its function is as follows. Responsible for viral attachment to target host cell, by binding to the cell receptor. Its transport to the plasma membrane depends on interaction with E1 protein. The surface glycoproteins display an irregular helical organization and a pseudo-tetrameric inner nucleocapsid arrangement. Functionally, class II viral fusion protein. Fusion activity is inactive as long as E1 is bound to E2 in mature virion. After virus attachment to target cell and clathrin-mediated endocytosis, acidification of the endosome would induce dissociation of E1/E2 heterodimer and concomitant trimerization of the E1 subunits. This E1 homotrimer is fusion active, and promotes release of viral nucleocapsid in cytoplasm after endosome and viral membrane fusion. The cytoplasmic tail of spike glycoprotein E1 modulates virus release. The surface glycoproteins display an irregular helical organization and a pseudo-tetrameric inner nucleocapsid arrangement. This Homo sapiens (Human) protein is Structural polyprotein.